A 422-amino-acid chain; its full sequence is UDP-N-acetylglucosamine 1-carboxyvinyltransferase 2 (422 aa).

Phosphoenolpyruvate is bound at residue K22 to N23. Position 93 (R93) interacts with UDP-N-acetyl-alpha-D-glucosamine. C117 functions as the Proton donor in the catalytic mechanism. 2-(S-cysteinyl)pyruvic acid O-phosphothioketal is present on C117. UDP-N-acetyl-alpha-D-glucosamine-binding positions include R122–L126, D308, and I330.

This sequence belongs to the EPSP synthase family. MurA subfamily.

It localises to the cytoplasm. It carries out the reaction phosphoenolpyruvate + UDP-N-acetyl-alpha-D-glucosamine = UDP-N-acetyl-3-O-(1-carboxyvinyl)-alpha-D-glucosamine + phosphate. Its pathway is cell wall biogenesis; peptidoglycan biosynthesis. In terms of biological role, cell wall formation. Adds enolpyruvyl to UDP-N-acetylglucosamine. The chain is UDP-N-acetylglucosamine 1-carboxyvinyltransferase 2 from Legionella pneumophila (strain Lens).